We begin with the raw amino-acid sequence, 351 residues long: Pentatricopeptide repeat-containing protein At3g56030, mitochondrial (351 aa).

Residues 1–41 (MFRLKPLISVDLNQTMSLLRRFVKEANNSRFLLQSISGRSF) constitute a mitochondrion transit peptide. PPR repeat units follow at residues 124 to 158 (RKHSYETLIARLCKLGRIDDALVLINDMAIGEFGL), 159 to 193 (STCVFHPILNTLTKKNRIEEAWRVVELMRSHAIPV), 194 to 224 (DVTSYNYFLTSHCYDGDVAEASRVLRKMEEE), and 232 to 266 (DTRTYDALVLGACKSGRVEAAMAILRRMEEEGLSV).

Belongs to the PPR family. P subfamily.

Its subcellular location is the mitochondrion. The sequence is that of Pentatricopeptide repeat-containing protein At3g56030, mitochondrial from Arabidopsis thaliana (Mouse-ear cress).